A 427-amino-acid chain; its full sequence is Gamma-glutamyl phosphate reductase (427 aa).

This sequence belongs to the gamma-glutamyl phosphate reductase family.

The protein resides in the cytoplasm. The catalysed reaction is L-glutamate 5-semialdehyde + phosphate + NADP(+) = L-glutamyl 5-phosphate + NADPH + H(+). It functions in the pathway amino-acid biosynthesis; L-proline biosynthesis; L-glutamate 5-semialdehyde from L-glutamate: step 2/2. Catalyzes the NADPH-dependent reduction of L-glutamate 5-phosphate into L-glutamate 5-semialdehyde and phosphate. The product spontaneously undergoes cyclization to form 1-pyrroline-5-carboxylate. This chain is Gamma-glutamyl phosphate reductase, found in Anaeromyxobacter dehalogenans (strain 2CP-1 / ATCC BAA-258).